Reading from the N-terminus, the 400-residue chain is Peptidase M20 domain-containing protein C757.05c (400 aa).

The first 25 residues, 1–25 (MTMKISVWSLLIVIGYHLWMSPVLA), serve as a signal peptide directing secretion. The N-linked (GlcNAc...) asparagine glycan is linked to asparagine 80. Aspartate 152 contacts Zn(2+). Residue glutamate 186 is the Proton acceptor of the active site. Glutamate 187 is a binding site for Zn(2+).

The protein belongs to the peptidase M20A family. It depends on Zn(2+) as a cofactor.

It is found in the secreted. The polypeptide is Peptidase M20 domain-containing protein C757.05c (Schizosaccharomyces pombe (strain 972 / ATCC 24843) (Fission yeast)).